The following is a 322-amino-acid chain: Biotin synthase (322 aa).

A Radical SAM core domain is found at 39–266 (NQIQVSSLLN…KSVVRLSAGR (228 aa)). The [4Fe-4S] cluster site is built by Cys-54, Cys-58, and Cys-61. [2Fe-2S] cluster-binding residues include Cys-98, Cys-129, Cys-189, and Arg-261.

The protein belongs to the radical SAM superfamily. Biotin synthase family. As to quaternary structure, homodimer. Requires [4Fe-4S] cluster as cofactor. [2Fe-2S] cluster is required as a cofactor.

It carries out the reaction (4R,5S)-dethiobiotin + (sulfur carrier)-SH + 2 reduced [2Fe-2S]-[ferredoxin] + 2 S-adenosyl-L-methionine = (sulfur carrier)-H + biotin + 2 5'-deoxyadenosine + 2 L-methionine + 2 oxidized [2Fe-2S]-[ferredoxin]. It functions in the pathway cofactor biosynthesis; biotin biosynthesis; biotin from 7,8-diaminononanoate: step 2/2. Functionally, catalyzes the conversion of dethiobiotin (DTB) to biotin by the insertion of a sulfur atom into dethiobiotin via a radical-based mechanism. The chain is Biotin synthase from Ruthia magnifica subsp. Calyptogena magnifica.